The primary structure comprises 1958 residues: Callose synthase 7 (1958 aa).

Residues 1 to 29 (MASTSSGGRGEDGRPPQMQPVRSMSRKMT) are disordered. Topologically, residues 1-504 (MASTSSGGRG…LYRSFDRMWM (504 aa)) are cytoplasmic. A helical transmembrane segment spans residues 505–525 (FLVLSLQTMIIVAWHPSGSIL). Over 526–535 (AIFTEDVFRN) the chain is Extracellular. A helical membrane pass occupies residues 536–556 (VLTIFITSAFLNLLQATLDLV). Residues 557 to 569 (LSFGAWKSLKFSQ) are Cytoplasmic-facing. Residues 570–590 (IMRYITKFLMAAMWAIMLPIT) traverse the membrane as a helical segment. The Extracellular segment spans residues 591–620 (YSKSVQNPTGLIKFFSSWVGSWLHRSLYDY). A helical membrane pass occupies residues 621-641 (AIALYVLPNILAAVFFLLPPL). Residues 642–673 (RRIMERSNMRIVTLIMWWAQPKLYIGRGMHEE) lie on the Cytoplasmic side of the membrane. A helical membrane pass occupies residues 674-694 (MFALFKYTFFWVMLLLSKLAF). The Extracellular portion of the chain corresponds to 695–730 (SYYVEILPLVNPTKLIWDMHVVNYEWHEFFPNATHN). Residues 731 to 751 (IGVIIAIWGPIVLVYFMDTQI) traverse the membrane as a helical segment. At 752 to 1496 (WYAIFSTLFG…FDFYRMLSFY (745 aa)) the chain is on the cytoplasmic side. The helical transmembrane segment at 1497 to 1517 (FTTVGFYFSSMITVLTVYVFL) threads the bilayer. Over 1518–1547 (YGRLYLVLSGLEKNILQSASVHESNALEQA) the chain is Extracellular. Residues 1548 to 1568 (LAAQSVFQLGFLMVLPMVMEI) traverse the membrane as a helical segment. The Cytoplasmic portion of the chain corresponds to 1569–1576 (GLEKGFRT). A helical transmembrane segment spans residues 1577–1597 (ALGDFIIMQLQLASVFFTFQL). Residues 1598-1640 (GTKAHYFGRTILHGGSKYRATGRGFVVFHAKFAENYRLYSRSH) lie on the Extracellular side of the membrane. A helical membrane pass occupies residues 1641–1661 (FVKGLELVILLVVYQVYGTSY). The Cytoplasmic portion of the chain corresponds to 1662–1667 (RSSSTY). A helical transmembrane segment spans residues 1668–1688 (MYITFSMWFLVTSWLFAPFIF). The Extracellular portion of the chain corresponds to 1689-1742 (NPSGFEWQKTVDDWTDWKRWMGNRGGIGIVLDKSWESWWDIEQEHLKHTNLRGR). The helical transmembrane segment at 1743–1763 (VLEILLALRFLLYQYGIVYHL) threads the bilayer. Over 1764 to 1771 (NIARRHTT) the chain is Cytoplasmic. Residues 1772 to 1792 (FLVYGLSWAILLSVLLVLKMV) form a helical membrane-spanning segment. Residues 1793-1812 (SMGRRKFGTDFQVMFRILKA) lie on the Extracellular side of the membrane. A helical membrane pass occupies residues 1813-1833 (LLFLGFLSVMTVLFVVCGLTI). Residues 1834-1835 (SD) lie on the Cytoplasmic side of the membrane. A helical membrane pass occupies residues 1836-1856 (LFASILAFLPTGWAILLIGQA). The Extracellular segment spans residues 1857-1878 (LRSVFKGLGFWDSVKELGRAYE). A helical membrane pass occupies residues 1879–1899 (YIMGLVIFTPIAVLSWFPFVS). Topologically, residues 1900–1958 (EFQTRLLFNQAFSRGLQISMILAGKKDKETPSTKYLGHTEESFGLEHDTNTFNHYYLWT) are cytoplasmic.

It belongs to the glycosyltransferase 48 family.

The protein resides in the cell membrane. It carries out the reaction [(1-&gt;3)-beta-D-glucosyl](n) + UDP-alpha-D-glucose = [(1-&gt;3)-beta-D-glucosyl](n+1) + UDP + H(+). Its function is as follows. Involved in callose synthesis at the forming cell plate during cytokinesis. During plant growth and development, callose is found as a transitory component of the cell plate in dividing cells, is a major component of pollen mother cell walls and pollen tubes, and is found as a structural component of plasmodesmatal canals. This Arabidopsis thaliana (Mouse-ear cress) protein is Callose synthase 7 (CALS7).